The primary structure comprises 261 residues: Lys-63-specific deubiquitinase BRCC36 (261 aa).

Residues V6–Q149 form the MPN domain. The Zn(2+) site is built by H92, H94, and D105. Positions H92–D105 match the JAMM motif motif.

This sequence belongs to the peptidase M67A family. BRCC36 subfamily. As to quaternary structure, component of the BRCA1-A complex, at least composed of brca1, bard1, uimc1/rap80, abraxas1, brcc3/brcc36, babam2 and babam1/nba1. In the BRCA1-A complex, interacts directly with abraxas1 and babam2. Component of the BRISC complex, at least composed of abraxas2, brcc3/brcc36, babam2 and babam1/nba1. Within the complex, interacts directly with abraxas2. Both the BRCA1-A complex and the BRISC complex bind polyubiquitin. Zn(2+) is required as a cofactor.

The protein resides in the nucleus. Its subcellular location is the cytoplasm. The protein localises to the cytoskeleton. It localises to the spindle pole. Functionally, metalloprotease that specifically cleaves 'Lys-63'-linked polyubiquitin chains. Does not have activity toward 'Lys-48'-linked polyubiquitin chains. Component of the BRCA1-A complex, a complex that specifically recognizes 'Lys-63'-linked ubiquitinated histones H2A and H2AX at DNA lesions sites, leading to target the brca1-bard1 heterodimer to sites of DNA damage at double-strand breaks (DSBs). In the BRCA1-A complex, it specifically removes 'Lys-63'-linked ubiquitin on histones H2A and H2AX, antagonizing the rnf8-dependent ubiquitination at double-strand breaks (DSBs). Catalytic subunit of the BRISC complex, a multiprotein complex that specifically cleaves 'Lys-63'-linked ubiquitin in various substrates. Mediates the specific 'Lys-63'-specific deubiquitination associated with the COP9 signalosome complex (CSN), via the interaction of the BRISC complex with the CSN complex. The BRISC complex is required for normal mitotic spindle assembly and microtubule attachment to kinetochores via its role in deubiquitinating numa1. Plays a role in interferon signaling via its role in the deubiquitination of the interferon receptor ifnar1; deubiquitination increases ifnar1 activity by enhancing its stability and cell surface expression. Acts as a regulator of the NLRP3 inflammasome by mediating deubiquitination of nlrp3. Down-regulates the response to bacterial lipopolysaccharide (LPS) via its role in ifnar1 deubiquitination. This is Lys-63-specific deubiquitinase BRCC36 (brcc3) from Xenopus tropicalis (Western clawed frog).